Consider the following 875-residue polypeptide: DNA mismatch repair protein MutS (875 aa).

Residue 625 to 632 (GPNMGGKS) coordinates ATP.

The protein belongs to the DNA mismatch repair MutS family.

In terms of biological role, this protein is involved in the repair of mismatches in DNA. It is possible that it carries out the mismatch recognition step. This protein has a weak ATPase activity. The polypeptide is DNA mismatch repair protein MutS (Symbiobacterium thermophilum (strain DSM 24528 / JCM 14929 / IAM 14863 / T)).